The sequence spans 150 residues: PTTG1IP family member 2 (150 aa).

The first 19 residues, 1-19 (MCWLRAWSHILLPVFLSVA), serve as a signal peptide directing secretion. The Extracellular segment spans residues 20–98 (LIQLIFNLSD…SIFWANCNVD (79 aa)). Asparagine 26 carries N-linked (GlcNAc...) asparagine glycosylation. Residues 99 to 119 (LFGIVMLILIVILALAFLWYC) traverse the membrane as a helical segment. Residues 120–150 (LAYYFYMQQHMALYARHGQVPVYNWDAPGDW) are Cytoplasmic-facing.

The protein resides in the membrane. The polypeptide is PTTG1IP family member 2 (Mus musculus (Mouse)).